The primary structure comprises 128 residues: Cytochrome c oxidase subunit 5B, mitochondrial (128 aa).

Residues 1-30 constitute a mitochondrion transit peptide; the sequence is MASRLLRGVGALAAQALRRTARGAAVTRSM. Lys67 and Lys85 each carry N6-acetyllysine. 4 residues coordinate Zn(2+): Cys90, Cys92, Cys112, and Cys115. Lys120 carries the post-translational modification N6-acetyllysine.

Belongs to the cytochrome c oxidase subunit 5B family. Component of the cytochrome c oxidase (complex IV, CIV), a multisubunit enzyme composed of 14 subunits. The complex is composed of a catalytic core of 3 subunits MT-CO1, MT-CO2 and MT-CO3, encoded in the mitochondrial DNA, and 11 supernumerary subunits COX4I, COX5A, COX5B, COX6A, COX6B, COX6C, COX7A, COX7B, COX7C, COX8 and NDUFA4, which are encoded in the nuclear genome. The complex exists as a monomer or a dimer and forms supercomplexes (SCs) in the inner mitochondrial membrane with NADH-ubiquinone oxidoreductase (complex I, CI) and ubiquinol-cytochrome c oxidoreductase (cytochrome b-c1 complex, complex III, CIII), resulting in different assemblies (supercomplex SCI(1)III(2)IV(1) and megacomplex MCI(2)III(2)IV(2)).

Its subcellular location is the mitochondrion inner membrane. Its pathway is energy metabolism; oxidative phosphorylation. Its function is as follows. Component of the cytochrome c oxidase, the last enzyme in the mitochondrial electron transport chain which drives oxidative phosphorylation. The respiratory chain contains 3 multisubunit complexes succinate dehydrogenase (complex II, CII), ubiquinol-cytochrome c oxidoreductase (cytochrome b-c1 complex, complex III, CIII) and cytochrome c oxidase (complex IV, CIV), that cooperate to transfer electrons derived from NADH and succinate to molecular oxygen, creating an electrochemical gradient over the inner membrane that drives transmembrane transport and the ATP synthase. Cytochrome c oxidase is the component of the respiratory chain that catalyzes the reduction of oxygen to water. Electrons originating from reduced cytochrome c in the intermembrane space (IMS) are transferred via the dinuclear copper A center (CU(A)) of subunit 2 and heme A of subunit 1 to the active site in subunit 1, a binuclear center (BNC) formed by heme A3 and copper B (CU(B)). The BNC reduces molecular oxygen to 2 water molecules using 4 electrons from cytochrome c in the IMS and 4 protons from the mitochondrial matrix. This chain is Cytochrome c oxidase subunit 5B, mitochondrial (Cox5b), found in Mus musculus (Mouse).